Consider the following 414-residue polypeptide: Phosphopentomutase (414 aa).

6 residues coordinate Mn(2+): D10, D309, H314, D350, H351, and H362.

The protein belongs to the phosphopentomutase family. The cofactor is Mn(2+).

It is found in the cytoplasm. It catalyses the reaction 2-deoxy-alpha-D-ribose 1-phosphate = 2-deoxy-D-ribose 5-phosphate. It carries out the reaction alpha-D-ribose 1-phosphate = D-ribose 5-phosphate. Its pathway is carbohydrate degradation; 2-deoxy-D-ribose 1-phosphate degradation; D-glyceraldehyde 3-phosphate and acetaldehyde from 2-deoxy-alpha-D-ribose 1-phosphate: step 1/2. In terms of biological role, isomerase that catalyzes the conversion of deoxy-ribose 1-phosphate (dRib-1-P) and ribose 1-phosphate (Rib-1-P) to deoxy-ribose 5-phosphate (dRib-5-P) and ribose 5-phosphate (Rib-5-P), respectively. This is Phosphopentomutase from Hahella chejuensis (strain KCTC 2396).